The following is a 126-amino-acid chain: Large ribosomal subunit protein uL22 (126 aa).

This sequence belongs to the universal ribosomal protein uL22 family. In terms of assembly, part of the 50S ribosomal subunit.

This protein binds specifically to 23S rRNA; its binding is stimulated by other ribosomal proteins, e.g. L4, L17, and L20. It is important during the early stages of 50S assembly. It makes multiple contacts with different domains of the 23S rRNA in the assembled 50S subunit and ribosome. In terms of biological role, the globular domain of the protein is located near the polypeptide exit tunnel on the outside of the subunit, while an extended beta-hairpin is found that lines the wall of the exit tunnel in the center of the 70S ribosome. This is Large ribosomal subunit protein uL22 from Prochlorococcus marinus (strain NATL2A).